A 572-amino-acid chain; its full sequence is Urease subunit alpha (572 aa).

Residues 134–572 (GGIDSHIHFI…LPLAQRYFLF (439 aa)) enclose the Urease domain. Ni(2+)-binding residues include His139, His141, and Lys222. Lys222 is modified (N6-carboxylysine). Position 224 (His224) interacts with substrate. Residues His251 and His277 each contribute to the Ni(2+) site. The Proton donor role is filled by His325. Asp365 lines the Ni(2+) pocket.

The protein belongs to the metallo-dependent hydrolases superfamily. Urease alpha subunit family. In terms of assembly, heterotrimer of UreA (gamma), UreB (beta) and UreC (alpha) subunits. Three heterotrimers associate to form the active enzyme. It depends on Ni cation as a cofactor. In terms of processing, carboxylation allows a single lysine to coordinate two nickel ions.

The protein localises to the cytoplasm. The enzyme catalyses urea + 2 H2O + H(+) = hydrogencarbonate + 2 NH4(+). Its pathway is nitrogen metabolism; urea degradation; CO(2) and NH(3) from urea (urease route): step 1/1. This Paracidovorax citrulli (strain AAC00-1) (Acidovorax citrulli) protein is Urease subunit alpha.